Here is a 426-residue protein sequence, read N- to C-terminus: Protein PHOSPHATE STARVATION RESPONSE 2 (426 aa).

Disordered regions lie at residues 27–81, 96–123, and 198–247; these read ATLD…PLRS, YTNA…QYGG, and TQPQ…NSKT. A compositionally biased stretch (polar residues) spans 69–81; that stretch reads FQSSTGSVGPLRS. Composition is skewed to low complexity over residues 102-119 and 205-225; these read YNSQ…NYGS and AAQS…SSQS. Residues 237 to 246 show a composition bias toward polar residues; the sequence is SGASNTSNSK. In terms of domain architecture, HTH myb-type spans 243–303; it reads SNSKTRMRWT…HLQKYRTARY (61 aa). A DNA-binding region (H-T-H motif) is located at residues 274–299; sequence PKGVLKLMKADNLTIYHVKSHLQKYR. Disordered stretches follow at residues 302–326 and 382–426; these read RYRP…PSID and DKAV…SGDR. Residues 303 to 322 are compositionally biased toward basic and acidic residues; that stretch reads YRPELSEGSSEKKAASKEDI. Composition is skewed to polar residues over residues 387–401 and 411–426; these read ASTS…SDLP and ENSQ…SGDR.

Interacts (via C-terminus) with SPX4 (via N-terminus) in the presence of inositol polyphosphate. Interacts (via C-terminus) with SPX1 and SPX2 (via SPX domain). Interacts with RLI1 in the nucleus.

Its subcellular location is the nucleus. It localises to the cytoplasm. Functionally, transcription factor involved in phosphate starvation signaling. Binds to P1BS, an imperfect palindromic sequence 5'-GNATATNC-3', to promote the expression of inorganic phosphate (Pi) starvation-responsive genes. Functionally redundant with PHR1 and PHR3 in regulating Pi starvation response and Pi homeostasis. Involved in both systematic and local Pi-signaling pathways. Regulates several Pi transporters. PHR2 binding to DNA is repressed redundantly by SPX1, SPX2 and SPX4 in a PI-dependent manner. The DNA-binding activity is also repressed by SPX4. Involved in root growth under Pi deprivation. Involved in the modulation of Pi response and homeostasis together with RLI1; promotes RLI1 expression in response to nitrate availability, thus triggering the nitrate-induced phosphate response (NIPR). This is Protein PHOSPHATE STARVATION RESPONSE 2 from Oryza sativa subsp. indica (Rice).